The following is a 397-amino-acid chain: Potassium channel subfamily K member 4 (397 aa).

The Cytoplasmic portion of the chain corresponds to 1 to 3; that stretch reads MRS. The chain crosses the membrane as a helical span at residues 4-24; that stretch reads TTLLALLALVLLYLVSGALVF. Over 25–88 the chain is Extracellular; it reads QALEQPHEQQ…WTNSSNHSSA (64 aa). Asn81 carries N-linked (GlcNAc...) asparagine glycosylation. Residues 89–103 constitute an intramembrane region (helical); that stretch reads WNLGSAFFFSGTIIT. Positions 104, 105, 106, and 107 each coordinate K(+). Positions 104 to 109 are selectivity filter 1; the sequence is TIGYGN. An intramembrane segment occupies 104–110; it reads TIGYGNI. The Extracellular segment spans residues 111 to 118; it reads ALHTDAGR. A helical membrane pass occupies residues 119–151; it reads LFCIFYALVGIPLFGMLLAGVGDRLGSSLRRGI. Residues 152-173 are Cytoplasmic-facing; sequence GHIEAVFLKWHVPPGLVRMLSA. A helical membrane pass occupies residues 174-195; sequence VLFLLIGCLLFVLTPTFVFSYM. Over 196 to 200 the chain is Extracellular; sequence ESWSK. The helical intramembrane region spans 201–214; sequence LEAIYFVIVTLTTV. 4 residues coordinate K(+): Thr213, Val214, Gly215, and Phe216. A selectivity filter 2 region spans residues 213 to 218; sequence TVGFGD. The stretch at 215–220 is an intramembrane region; it reads GFGDYV. At 221–234 the chain is on the extracellular side; sequence PGDGTGQNSPAYQP. The helical transmembrane segment at 235–261 threads the bilayer; it reads LVWFWILFGLAYFASVLTTIGNWLRAV. At 262–397 the chain is on the cytoplasmic side; it reads SRRTRAEMGG…GRLRDKAVPV (136 aa). Residues 282 to 292 are compositionally biased toward polar residues; sequence TVTARVTQRTG. The segment at 282–397 is disordered; sequence TVTARVTQRT…GRLRDKAVPV (116 aa). The span at 369–388 shows a compositional bias: basic residues; that stretch reads PRGRRRPNPTKKPSRPRGPG.

The protein belongs to the two pore domain potassium channel (TC 1.A.1.8) family. In terms of assembly, homodimer; disulfide-linked. Forms heterodimers with other 2-pore domain K(+) channel subunits, such as KCNK2 and KCNK10. Detected in brain, and at much lower levels in liver, skeletal muscle and testis.

It is found in the cell membrane. The protein resides in the cell projection. The protein localises to the axon. The catalysed reaction is K(+)(in) = K(+)(out). It catalyses the reaction Rb(+)(in) = Rb(+)(out). The enzyme catalyses Cs(+)(in) = Cs(+)(out). With respect to regulation, activated by various stimuli including intracellular basic pH, mechanical stretch and heat and polyunsaturated fatty acids such as arachidonic acid. K(+) channel that conducts voltage-dependent outward rectifying currents upon membrane depolarization. Voltage sensing is coupled to K(+) electrochemical gradient in an 'ion flux gating' mode where outward but not inward ion flow opens the gate. Converts to voltage-independent 'leak' conductance mode upon stimulation by various stimuli including mechanical membrane stretch, basic pH, heat and lipids. Homo- and heterodimerizes to form functional channels with distinct regulatory and gating properties. At trigeminal A-beta afferent nerves, the heterodimer of KCNK2/TREK-1 and KCNK4/TRAAK is mostly coexpressed at nodes of Ranvier where it conducts voltage-independent mechanosensitive and thermosensitive currents, allowing rapid action potential repolarization, high speed and high frequence saltatory conduction on myelinated nerves to ensure prompt sensory responses. Permeable to other monovalent cations such as Rb(+) and Cs(+). In Rattus norvegicus (Rat), this protein is Potassium channel subfamily K member 4.